The following is a 340-amino-acid chain: Ras association domain-containing protein 1 (340 aa).

S2 is modified (N-acetylserine). S2 is subject to Phosphoserine. Residues 2–115 (SAEPELIELR…DLGWDSALER (114 aa)) are mediates interaction with E4F1. The Phorbol-ester/DAG-type zinc finger occupies 51–101 (GHRFQPAGPTTHTWCDLCGDFIWGVVRKGLQCAHCKFTCHYRCRALVCLDC). Residues 175–185 (SVPSSKKPPSL) are compositionally biased toward low complexity. Residues 175 to 196 (SVPSSKKPPSLQDARRGTGRST) form a disordered region. Residues 194–288 (RSTAVKRRTS…LSFVLKENDS (95 aa)) form the Ras-associating domain. Residues 290 to 337 (EVNWDAFSMPELHNFLRILQREEEEHLRQILQKYSRCRQKIQEALHAC) enclose the SARAH domain. An MOAP1-binding region spans residues 311-314 (EEEE).

In terms of assembly, interacts with MAP1S and XPA. Binds to the N-terminal of CDC20 during prometaphase. Binds to STK3/MST2 and STK4/MST1. Recruited to the TNFRSF1A and TNFRSF10A complexes in response to their respective cognate ligand, after internalization. Can self-associate. Part of a complex with MDM2, DAXX, RASSF1 and USP7. As to quaternary structure, interacts with MOAP1 and E4F1. Interacts with RSSF5 and probably associates with HRAS via a RSSF1 isoform A-RSSF5 heterodimer. Interacts (via C-terminus) with DAXX (via N-terminus); the interaction is independent of MDM2 and TP53. Interacts (via N-terminus) with MDM2 (via C-terminus); the interaction is independent of TP53. Interacts with RAB39A. Interacts with RAB39B; the interaction is weak. Interacts with ECM2. Interacts with RAB39B; the interaction is strong. Does not interact with RAB39A.

The protein resides in the cytoplasm. The protein localises to the cytoskeleton. Its subcellular location is the microtubule organizing center. It localises to the centrosome. It is found in the spindle. The protein resides in the spindle pole. The protein localises to the nucleus. Its function is as follows. Potential tumor suppressor. Required for death receptor-dependent apoptosis. Mediates activation of Mediates activation of STK3/MST2 and STK4/MST1 during Fas-induced apoptosis by preventing their dephosphorylation. When associated with MOAP1, promotes BAX conformational change and translocation to mitochondrial membranes in response to TNF and TNFSF10 stimulation. Isoform A interacts with CDC20, an activator of the anaphase-promoting complex, APC, resulting in the inhibition of APC activity and mitotic progression. Inhibits proliferation by negatively regulating cell cycle progression at the level of G1/S-phase transition by regulating accumulation of cyclin D1 protein. Isoform C has been shown not to perform these roles, no function has been identified for this isoform. Isoform A disrupts interactions among MDM2, DAXX and USP7, thus contributing to the efficient activation of TP53 by promoting MDM2 self-ubiquitination in cell-cycle checkpoint control in response to DNA damage. The protein is Ras association domain-containing protein 1 of Mus musculus (Mouse).